The following is a 997-amino-acid chain: MKSSGSARTARRNAALPSTDAQTGALATVANGRAKPATKPKDSIRQTKRTTKAAGASKPAARTREDKDGPLFEDIRFLGRLLGDVVREQEGDTVFDVVETIRQTAVKFRREDDSQAAQTLEKKLRKLTPEQTVSVVRAFSYFSHLANIAEDRHHNRRRRIHALAGSAPQPGTVAYALEQLKTSGNASKRVLQRFFDDALIVPVLTAHPTEVQRKSILDAQHDIARLLAERDQPLTARERAYNESMLRARVTALWQTRMLRDARLTVGDEIENALSYYRTTFLDELPALYGDIEAALAEHGLPARVPAFFQMGSWIGGDRDGNPNVTAATLDEAINRQAAVILEHYLEQVHKLGAELSVSNLLVGANDAVKALAAASPDQSPHRVDEPYRRALIGIYTRLAASARVRLGEGTVPVRSAGRGAPPVRAVPYADSEAFVADLKVLTASLEEHHGASLAAPRLTPLMRAAEVFGFHLSSIDLRQSSDIHEAVVAELFARAGVHADYASLSEDDKLIALLAALADPRPLRSPYIEYSALAQSELGVFEKAREVRAQFGPRAVRNYIISHTETVSDLVEVLLLQKETGLLEGAFGAAHDSARNGLMVIPLFETIPDLRDAARIMREYFALPGIEALIAHQGAEQEVMLGYSDSNKDGGFLTSNWELYRAELALVDLFRDRKITLRLFHGRGGTVGRGGGPTYQAILSQPPGTVNGQIRLTEQGEVIASKFANPEIGRRNLETVVAATLEASLLPQSNAPAQLPAFEAAMQALSDAAMASYRALVYETPGFTDYFFAATPITEIAELNIGSRPASRKLQDPKNRRIEDLRAIPWGFSWGQCRLLLTGWYGFGSAVSAYLDGAPDAAARTKRVALLKKMNKTWPFFANLLSNMDMVLAKTDLAVASRYAQLVADRKLRKHVFERIVAEWERTAQALAEITGHEGRLATNPLLARSIKNRFPYLDPLNHLQVELIKRHRAGDTNARLRRGIHLTINGIAAGLRNTG.

Residues 1–67 (MKSSGSARTA…KPAARTREDK (67 aa)) are disordered. Active-site residues include His-207 and Lys-649.

This sequence belongs to the PEPCase type 1 family. Mg(2+) is required as a cofactor.

It catalyses the reaction oxaloacetate + phosphate = phosphoenolpyruvate + hydrogencarbonate. Functionally, forms oxaloacetate, a four-carbon dicarboxylic acid source for the tricarboxylic acid cycle. In Burkholderia vietnamiensis (strain G4 / LMG 22486) (Burkholderia cepacia (strain R1808)), this protein is Phosphoenolpyruvate carboxylase.